Here is a 329-residue protein sequence, read N- to C-terminus: Porphobilinogen deaminase (329 aa).

At C250 the chain carries S-(dipyrrolylmethanemethyl)cysteine.

This sequence belongs to the HMBS family. In terms of assembly, monomer. The cofactor is dipyrromethane.

The catalysed reaction is 4 porphobilinogen + H2O = hydroxymethylbilane + 4 NH4(+). It participates in porphyrin-containing compound metabolism; protoporphyrin-IX biosynthesis; coproporphyrinogen-III from 5-aminolevulinate: step 2/4. Its function is as follows. Tetrapolymerization of the monopyrrole PBG into the hydroxymethylbilane pre-uroporphyrinogen in several discrete steps. This chain is Porphobilinogen deaminase, found in Burkholderia pseudomallei (strain 668).